A 301-amino-acid chain; its full sequence is Putative F-box/LRR-repeat protein 19 (301 aa).

Residues 18–66 enclose the F-box domain; it reads PDWSELTRECLLDIFSRLSQEQRWIGPMLVSKNWMNACYDPTLNTIFDL. 5 LRR repeats span residues 108–133, 134–159, 160–185, 231–256, and 257–282; these read IRHC…WIKN, CPNV…DISY, SYGI…KRNL, YSTL…DLRG, and CISL…IKPD.

The polypeptide is Putative F-box/LRR-repeat protein 19 (FBL19) (Arabidopsis thaliana (Mouse-ear cress)).